The following is a 203-amino-acid chain: uncharacterized protein (203 aa).

Residues 1–23 form a disordered region; sequence MGSSFVIDRSSSSPAPPRGPAPK.

This is an uncharacterized protein from Saccharomyces cerevisiae (strain ATCC 204508 / S288c) (Baker's yeast).